The following is a 141-amino-acid chain: HTH-type transcriptional repressor NsrR (141 aa).

Residues 2–129 enclose the HTH rrf2-type domain; it reads QLTSFTDYGL…DNYTLADLVE (128 aa). Positions 28 to 51 form a DNA-binding region, H-T-H motif; sequence ISEVTDVYGVSRNHMVKIINQLSR. [2Fe-2S] cluster contacts are provided by cysteine 91, cysteine 96, and cysteine 102.

The cofactor is [2Fe-2S] cluster.

Nitric oxide-sensitive repressor of genes involved in protecting the cell against nitrosative stress. May require iron for activity. The polypeptide is HTH-type transcriptional repressor NsrR (Escherichia coli O127:H6 (strain E2348/69 / EPEC)).